The primary structure comprises 424 residues: CUGBP Elav-like family member 4 (424 aa).

The disordered stretch occupies residues 8 to 27 (VANGQPDNSSLSSNPTGHMN). A compositionally biased stretch (polar residues) spans 9-24 (ANGQPDNSSLSSNPTG). RRM domains lie at 47–128 (IKLF…PADS) and 342–417 (PQPP…LKRP).

Belongs to the CELF/BRUNOL family.

It localises to the nucleus. The protein localises to the cytoplasm. Its function is as follows. RNA-binding protein that may be implicated in the regulation of pre-mRNA alternative splicing. This chain is CUGBP Elav-like family member 4 (celf4), found in Xenopus tropicalis (Western clawed frog).